Reading from the N-terminus, the 246-residue chain is tRNA (guanine-N(1)-)-methyltransferase (246 aa).

S-adenosyl-L-methionine is bound by residues glycine 113 and 132 to 137 (LGDFVV).

The protein belongs to the RNA methyltransferase TrmD family. In terms of assembly, homodimer.

The protein resides in the cytoplasm. It catalyses the reaction guanosine(37) in tRNA + S-adenosyl-L-methionine = N(1)-methylguanosine(37) in tRNA + S-adenosyl-L-homocysteine + H(+). Functionally, specifically methylates guanosine-37 in various tRNAs. The polypeptide is tRNA (guanine-N(1)-)-methyltransferase (Latilactobacillus sakei subsp. sakei (strain 23K) (Lactobacillus sakei subsp. sakei)).